The following is a 274-amino-acid chain: Long chain fatty acid elongase 6 (274 aa).

Residues 1-30 lie on the Extracellular side of the membrane; the sequence is MPQGEVSFFEVLTTAPFSHELSKKHIAQTQ. A helical membrane pass occupies residues 31-51; that stretch reads YAAFWISMAYVVVIFGLKAVM. Residues 52–69 lie on the Cytoplasmic side of the membrane; sequence TNRKPFDLTGPLNLWNAG. Residues 70–90 traverse the membrane as a helical segment; that stretch reads LAIFSTLGSLATTFGLLHEFF. Topologically, residues 91-111 are extracellular; it reads SRGFFESYIHIGDFYNGLSGM. A helical membrane pass occupies residues 112-132; the sequence is FTWLFVLSKVAEFGDTLFIIL. Over 133 to 135 the chain is Cytoplasmic; sequence RKK. The helical transmembrane segment at 136 to 156 threads the bilayer; the sequence is PLMFLHWYHHVLTMNYAFMSF. The Extracellular segment spans residues 157 to 159; it reads EAN. The chain crosses the membrane as a helical span at residues 160 to 180; the sequence is LGFNTWITWMNFSVHSIMYGY. Residues 181–202 are Cytoplasmic-facing; sequence YMLRSFGVKVPAWIAKNITTMQ. Residues 203–223 traverse the membrane as a helical segment; that stretch reads ILQFVITHFILFHVGYLAVTG. Topologically, residues 224–230 are extracellular; that stretch reads QSVDSTP. A helical membrane pass occupies residues 231-251; it reads GYYWFCLLMEISYVVLFGNFY. Residues 252–274 are Cytoplasmic-facing; sequence YQSYIKGGGKKFNAEKKTEKKIE.

This sequence belongs to the ELO family. Expressed in the gut, neurons, pharynx and muscles of the vulva.

It localises to the membrane. The enzyme catalyses isopentadecanoyl-CoA + malonyl-CoA + H(+) = 3-oxoisoheptadecanoyl-CoA + CO2 + CoA. The protein operates within lipid metabolism; fatty acid biosynthesis. Its function is as follows. Catalyzes the first and rate-limiting reaction of the four reactions that constitute the long-chain fatty acids elongation cycle. Uses malonyl-CoA to add 2 carbons per cycle to the chain of long-chain fatty acids. Condensing enzyme required for the formation of isoheptadecanoate (C17iso), which plays critical roles in animal development and growth. The sequence is that of Long chain fatty acid elongase 6 (elo-6) from Caenorhabditis elegans.